The following is a 1085-amino-acid chain: Protein CROWDED NUCLEI 3 (1085 aa).

2 coiled-coil regions span residues 51 to 149 and 185 to 695; these read DEAS…NDLK and RERA…LDVL. Residue Lys-318 forms a Glycyl lysine isopeptide (Lys-Gly) (interchain with G-Cter in ubiquitin) linkage. Residues 404-411 carry the Nuclear localization signal motif; it reads AKREAALE. Lys-661 is covalently cross-linked (Glycyl lysine isopeptide (Lys-Gly) (interchain with G-Cter in ubiquitin)). Phosphoserine occurs at positions 764, 787, 825, and 843. Disordered regions lie at residues 801–997 and 1020–1077; these read TVKL…GKAE and NNTG…SIGK. Residues 813-825 are compositionally biased toward basic and acidic residues; that stretch reads SLDRVSGEDHEPS. A compositionally biased stretch (basic residues) spans 854–868; sequence RRGRGRGRGRGKSVR. Positions 877–897 are enriched in basic and acidic residues; the sequence is VSRDSKPSDGETPRKRQREQT. Ser-910 carries the phosphoserine modification. Residues 932–941 show a composition bias toward polar residues; sequence VSQTPGQTRY. The segment covering 949–995 has biased composition (basic and acidic residues); that stretch reads VGTEEDKAQASKGATEKQERVNDDIRKVPSPKETRTPPEGENRENGK. A compositionally biased stretch (acidic residues) spans 1045–1066; sequence EEDDENISMIEEENEGEEEEET.

This sequence belongs to the CRWN family. In terms of assembly, core component of the LINC complex which is composed of inner nuclear membrane SUN domain-containing proteins coupled to outer nuclear membrane WIP proteins, the nucleoskeletal CRWN/LINC proteins, and, possibly, KAKU4. In terms of tissue distribution, expressed at low levels in roots, leaves, flowers and flower stalks.

The protein resides in the nucleus membrane. It is found in the nucleus. The protein localises to the nucleoplasm. Its subcellular location is the cytoplasm. It localises to the nucleus lamina. Its function is as follows. Component of SUN-protein-containing multivariate complexes also called LINC complexes which link the nucleoskeleton and cytoskeleton by providing versatile outer nuclear membrane attachment sites for cytoskeletal filaments. Required for nucleus structure organization (e.g. size and shape). The protein is Protein CROWDED NUCLEI 3 of Arabidopsis thaliana (Mouse-ear cress).